We begin with the raw amino-acid sequence, 603 residues long: NADH-ubiquinone oxidoreductase chain 5 (603 aa).

15 consecutive transmembrane segments (helical) span residues 38–58, 87–107, 122–142, 144–160, 171–191, 211–233, 241–261, 272–292, 301–320, 325–347, 370–390, 407–429, 458–478, 482–502, and 582–602; these read SIVASTFIISLFPTTMFMCLD, MMFIPVALFVTWSIMEFSLWY, LIFLITMLILVTANNLFQLFI, WEGVGIMSFLLISWWYA, AILYNRIGDIGFILALAWFIL, TPLLGLLLAAAGKSAQLGLHPWL, TPVSALLHSSTMVVAGIFLLI, LIQTLTLCLGAITTLFAAVCA, IVAFSTSSQLGLMMVTIGIN, AFLHICTHAFFKAMLFMCSGSII, STSLTIGSLALAGMPFLTGFY, WALSITLIATSLTSAYSTRMILL, AAGSLFAGFLITNNISPASPF, IPLYLKLTALAVTFLGLLTAL, and GMIKLYFLSFFFPLILTLLLI.

The protein belongs to the complex I subunit 5 family. As to quaternary structure, core subunit of respiratory chain NADH dehydrogenase (Complex I) which is composed of 45 different subunits.

It localises to the mitochondrion inner membrane. It carries out the reaction a ubiquinone + NADH + 5 H(+)(in) = a ubiquinol + NAD(+) + 4 H(+)(out). Functionally, core subunit of the mitochondrial membrane respiratory chain NADH dehydrogenase (Complex I) which catalyzes electron transfer from NADH through the respiratory chain, using ubiquinone as an electron acceptor. Essential for the catalytic activity and assembly of complex I. The polypeptide is NADH-ubiquinone oxidoreductase chain 5 (MT-ND5) (Homo sapiens (Human)).